A 212-amino-acid chain; its full sequence is Thymidylate kinase (212 aa).

ATP is bound at residue 11–18 (GPEGAGKT).

It belongs to the thymidylate kinase family.

It carries out the reaction dTMP + ATP = dTDP + ADP. Phosphorylation of dTMP to form dTDP in both de novo and salvage pathways of dTTP synthesis. In Streptococcus pneumoniae (strain CGSP14), this protein is Thymidylate kinase.